A 407-amino-acid polypeptide reads, in one-letter code: MKGVLFIVASLVAFATGQDCPAYYVRSQSGQSCYRYFNMRVPYRMASEFCEMVTPCGNGPAKMGALASVSSPQENMEIYQLVAGFSQDNQMENEVWLGWNSMSPFFWEDGTPAYPNGFAAFSSSGMAPPRPGAPPSRAWPVNPQNPMSGPPGRAPVMKRQNPPVRPGQGGRQIPQGVGPQWEAVEVTAMRAFVCEVPAGRNVPIGQQPGMGQGFGNQQPGFGNQPGMGGRQPGFGNQPGMGGRQPGFGNQPGMGGRQPGFGNQPGVGGRQPGFGNQPGMGGRQPGFGNQPGVGGRQPGFGNQPGMGGQQPGVGGRQPGFGNQPGMGGNQPGMGGQQPGMGGRQPGVGGRQPGMGGQQPGMGGRQPGMGGQQPNNPNNPNNPNNPNNPNNPNPRFNRPRMLQEADALA.

Residues 1-17 (MKGVLFIVASLVAFATG) form the signal peptide. A C-type lectin domain is found at 29 to 160 (SGQSCYRYFN…PGRAPVMKRQ (132 aa)). Disordered stretches follow at residues 143 to 176 (PQNP…IPQG) and 204 to 407 (IGQQ…DALA). The span at 223 to 369 (NQPGMGGRQP…MGGRQPGMGG (147 aa)) shows a compositional bias: gly residues. Residues 370-398 (QQPNNPNNPNNPNNPNNPNNPNPRFNRPR) show a composition bias toward low complexity.

The protein belongs to the SM50 family. Expressed specifically in the micromere/primary mesenchyme cells (PMC) lineage.

It localises to the secreted. Functionally, major matrix protein of the sea urchin embryo spicule which directs crystal growth in certain orientations and inhibit growth in others. The sequence is that of 41 kDa spicule matrix protein from Hemicentrotus pulcherrimus (Sea urchin).